Consider the following 195-residue polypeptide: Early E3 22.2 kDa glycoprotein (195 aa).

Residues Asn-20, Asn-61, Asn-76, Asn-88, Asn-126, and Asn-139 are each glycosylated (N-linked (GlcNAc...) asparagine; by host).

This is Early E3 22.2 kDa glycoprotein from Canine adenovirus serotype 1 (strain Glaxo) (CAdV-1).